Consider the following 257-residue polypeptide: Neurotrophin-3 (257 aa).

Positions M1–G18 are cleaved as a signal peptide. Residues N19 to R138 constitute a propeptide that is removed on maturation. Residues S61 to A81 form a disordered region. The span at E67–G76 shows a compositional bias: basic and acidic residues. An N-linked (GlcNAc...) asparagine glycan is attached at N131. Cystine bridges form between C152–C217, C195–C246, and C205–C248.

This sequence belongs to the NGF-beta family. As to expression, brain and peripheral tissues.

The protein localises to the secreted. Functionally, seems to promote the survival of visceral and proprioceptive sensory neurons. The chain is Neurotrophin-3 (NTF3) from Homo sapiens (Human).